The following is a 384-amino-acid chain: 8-amino-7-oxononanoate synthase (384 aa).

Arginine 21 is a binding site for substrate. Residue 108-109 coordinates pyridoxal 5'-phosphate; sequence GY. Residue histidine 133 participates in substrate binding. Pyridoxal 5'-phosphate is bound by residues serine 179, histidine 207, and threonine 233. Lysine 236 is modified (N6-(pyridoxal phosphate)lysine). Position 350 (threonine 350) interacts with substrate.

This sequence belongs to the class-II pyridoxal-phosphate-dependent aminotransferase family. BioF subfamily. As to quaternary structure, homodimer. Pyridoxal 5'-phosphate is required as a cofactor.

The enzyme catalyses 6-carboxyhexanoyl-[ACP] + L-alanine + H(+) = (8S)-8-amino-7-oxononanoate + holo-[ACP] + CO2. It participates in cofactor biosynthesis; biotin biosynthesis. Catalyzes the decarboxylative condensation of pimeloyl-[acyl-carrier protein] and L-alanine to produce 8-amino-7-oxononanoate (AON), [acyl-carrier protein], and carbon dioxide. In Buchnera aphidicola subsp. Baizongia pistaciae (strain Bp), this protein is 8-amino-7-oxononanoate synthase.